The primary structure comprises 971 residues: Translation initiation factor IF-2 (971 aa).

Over residues 49–63 the composition is skewed to basic and acidic residues; that stretch reads HLRKSHGATDGDKRK. Disordered regions lie at residues 49 to 86 and 101 to 385; these read HLRK…ARTI and DVAE…APTE. Residues 105–114 are compositionally biased toward low complexity; that stretch reads GAEQGQAQVA. The segment covering 121-177 has biased composition (basic and acidic residues); it reads ELKRREEEARREAELLEKQAQELRERQERLEREEAERRAREEAAEAQRRRAEEEAAA. Over residues 178–209 the composition is skewed to low complexity; it reads KRAAAAAVEAQQVAAQQAAEAQQETAGAQSAQ. Basic and acidic residues predominate over residues 210–261; it reads DEARAAAERAAQREAAKKAEDAAREAADKTRAEQEEIRKRREAAEAEARAIR. The segment covering 277–286 has biased composition (pro residues); the sequence is PPKPVEPPKP. The span at 298-325 shows a compositional bias: low complexity; that stretch reads KPAGASAARPAVKKPAGAAPATTAPAGA. Residues 355–368 show a composition bias toward gly residues; sequence SSGGVDRGWRGGPK. Residues 471 to 640 form the tr-type G domain; the sequence is PRPPVVTVMG…LLQAEVLELK (170 aa). Positions 480-487 are G1; the sequence is GHVDHGKT. 480 to 487 contacts GTP; the sequence is GHVDHGKT. A G2 region spans residues 505–509; it reads GITQH. Positions 526 to 529 are G3; it reads DTPG. GTP-binding positions include 526 to 530 and 580 to 583; these read DTPGH and NKID. Residues 580 to 583 are G4; that stretch reads NKID. Residues 616–618 are G5; that stretch reads SAK.

The protein belongs to the TRAFAC class translation factor GTPase superfamily. Classic translation factor GTPase family. IF-2 subfamily.

It is found in the cytoplasm. One of the essential components for the initiation of protein synthesis. Protects formylmethionyl-tRNA from spontaneous hydrolysis and promotes its binding to the 30S ribosomal subunits. Also involved in the hydrolysis of GTP during the formation of the 70S ribosomal complex. The polypeptide is Translation initiation factor IF-2 (Burkholderia ambifaria (strain ATCC BAA-244 / DSM 16087 / CCUG 44356 / LMG 19182 / AMMD) (Burkholderia cepacia (strain AMMD))).